The chain runs to 241 residues: Small ribosomal subunit protein uS3 (241 aa).

The 71-residue stretch at 39–109 (IRQYITKNLS…QIRINVIEVQ (71 aa)) folds into the KH type-2 domain. The segment at 214–241 (EEIPMPVPSQTPRRQRRRQQFEDRSGEE) is disordered. Positions 232 to 241 (QQFEDRSGEE) are enriched in basic and acidic residues.

It belongs to the universal ribosomal protein uS3 family. Part of the 30S ribosomal subunit. Forms a tight complex with proteins S10 and S14.

In terms of biological role, binds the lower part of the 30S subunit head. Binds mRNA in the 70S ribosome, positioning it for translation. This Rippkaea orientalis (strain PCC 8801 / RF-1) (Cyanothece sp. (strain PCC 8801)) protein is Small ribosomal subunit protein uS3.